The sequence spans 578 residues: Nuclear receptor subfamily 1 group D member 2 (578 aa).

The tract at residues 1 to 60 (MELNAGGVIAYISSSSSASSPASCHSEGSENSFQSSSSSVPSSPNSSNCDANGNPKNTDV) is required for phosphorylation by CSNK1E and cytoplasmic localization. The interval 1–99 (MELNAGGVIA…HSGMTKFSGM (99 aa)) is modulating. Over residues 13 to 47 (SSSSSASSPASCHSEGSENSFQSSSSSVPSSPNSS) the composition is skewed to low complexity. Residues 13–89 (SSSSSASSPA…KPGAPGMTKS (77 aa)) form a disordered region. Position 46 is a phosphoserine; by GSK3-beta (Ser46). The segment covering 48 to 61 (NCDANGNPKNTDVS) has biased composition (polar residues). The nuclear receptor DNA-binding region spans 100 to 176 (VLLCKVCGDV…VGMSRDAVRF (77 aa)). 2 consecutive NR C4-type zinc fingers follow at residues 103-123 (CKVC…CEGC) and 140-164 (CLKN…FKKC). 2 positions are modified to N6-acetyllysine; by KAT5: Lys162 and Lys163. The disordered stretch occupies residues 214-247 (EPHEQSVPPAQEQLRPKPQLEQENIKSTPPPSDF). Basic and acidic residues predominate over residues 227–237 (LRPKPQLEQEN). 2 disulfide bridges follow: Cys336/Cys342 and Cys373/Cys383. In terms of domain architecture, NR LBD spans 368 to 578 (RNSYLCSTGG…EELLAFKVHP (211 aa)). Heme is bound by residues Cys383 and His567. An interaction with ZNHIT1 region spans residues 396 to 578 (SGHEIWEEFS…EELLAFKVHP (183 aa)).

Belongs to the nuclear hormone receptor family. NR1 subfamily. Binds DNA as a monomer or a homodimer. Interacts with NCOA5 coactivator, leading to a strong increase of transcription of target genes. Interacts (via N-terminus) with KAT5. Interacts (via C-terminus) with HDAC1. Interacts with ZNHIT1. Interacts with SIAH2. Deacetylated by HDAC1. Acetylation and deacetylation regulate its transcriptional regulatory activity. Post-translationally, under more reducing intracellular redox conditions, Cys-383 is in its heme-bound state, which is optimal for recruitment of the NCOR1/HDAC3 corepressor complex and repression of target genes. When subjected to oxidative stress conditions, Cys-383 undergoes oxidation to form a disulfide bridge with Cys-373, also triggering a ligand switch that results in release of bound heme and derepression of target genes. In terms of processing, ubiquitinated by SIAH2; leading to its proteasomal degradation. Phosphorylated by CSNK1E; phosphorylation enhances its cytoplasmic localization.

Its subcellular location is the nucleus. The protein resides in the cytoplasm. The heme-bound form can bind gaseous signaling molecules such as CO and nitric oxide (NO) and NO can reverse its transcriptional repressor activity. Its function is as follows. Transcriptional repressor which coordinates circadian rhythm and metabolic pathways in a heme-dependent manner. Integral component of the complex transcription machinery that governs circadian rhythmicity and forms a critical negative limb of the circadian clock by directly repressing the expression of core clock components BMAL1 and CLOCK. Also regulates genes involved in metabolic functions, including lipid metabolism and the inflammatory response. Acts as a receptor for heme which stimulates its interaction with the NCOR1/HDAC3 corepressor complex, enhancing transcriptional repression. Recognizes two classes of DNA response elements within the promoter of its target genes and can bind to DNA as either monomers or homodimers, depending on the nature of the response element. Binds as a monomer to a response element composed of the consensus half-site motif 5'-[A/G]GGTCA-3' preceded by an A/T-rich 5' sequence (RevRE), or as a homodimer to a direct repeat of the core motif spaced by two nuclegotides (RevDR-2). Acts as a potent competitive repressor of ROR alpha (RORA) function and also negatively regulates the expression of NR1D1. Regulates lipid and energy homeostasis in the skeletal muscle via repression of genes involved in lipid metabolism and myogenesis including: CD36, FABP3, FABP4, UCP3, SCD1 and MSTN. Regulates hepatic lipid metabolism via the repression of APOC3. Represses gene expression at a distance in macrophages by inhibiting the transcription of enhancer-derived RNAs (eRNAs). In addition to its activity as a repressor, can also act as a transcriptional activator. Acts as a transcriptional activator of the sterol regulatory element-binding protein 1 (SREBF1) and the inflammatory mediator interleukin-6 (IL6) in the skeletal muscle. Plays a role in the regulation of circadian sleep/wake cycle; essential for maintaining wakefulness during the dark phase or active period. Key regulator of skeletal muscle mitochondrial function; negatively regulates the skeletal muscle expression of core clock genes and genes involved in mitochondrial biogenesis, fatty acid beta-oxidation and lipid metabolism. May play a role in the circadian control of neutrophilic inflammation in the lung. This chain is Nuclear receptor subfamily 1 group D member 2, found in Rattus norvegicus (Rat).